The sequence spans 150 residues: FAD synthase (150 aa).

ATP-binding positions include 11-12 (TF), 16-19 (HPGH), Asp96, and Tyr124.

This sequence belongs to the archaeal FAD synthase family. In terms of assembly, homodimer. The cofactor is a divalent metal cation.

It catalyses the reaction FMN + ATP + H(+) = FAD + diphosphate. It participates in cofactor biosynthesis; FAD biosynthesis; FAD from FMN: step 1/1. In terms of biological role, catalyzes the transfer of the AMP portion of ATP to flavin mononucleotide (FMN) to produce flavin adenine dinucleotide (FAD) coenzyme. This Methanococcus maripaludis (strain C7 / ATCC BAA-1331) protein is FAD synthase.